Here is a 1390-residue protein sequence, read N- to C-terminus: DNA-directed RNA polymerase subunit beta' (1390 aa).

Cys70, Cys72, Cys85, and Cys88 together coordinate Zn(2+). Residues Asp460, Asp462, and Asp464 each coordinate Mg(2+). 4 residues coordinate Zn(2+): Cys814, Cys888, Cys895, and Cys898.

It belongs to the RNA polymerase beta' chain family. As to quaternary structure, the RNAP catalytic core consists of 2 alpha, 1 beta, 1 beta' and 1 omega subunit. When a sigma factor is associated with the core the holoenzyme is formed, which can initiate transcription. Requires Mg(2+) as cofactor. Zn(2+) is required as a cofactor.

It catalyses the reaction RNA(n) + a ribonucleoside 5'-triphosphate = RNA(n+1) + diphosphate. DNA-dependent RNA polymerase catalyzes the transcription of DNA into RNA using the four ribonucleoside triphosphates as substrates. This is DNA-directed RNA polymerase subunit beta' from Pseudoalteromonas translucida (strain TAC 125).